Consider the following 443-residue polypeptide: Chromosomal replication initiator protein DnaA (443 aa).

The interval 1–76 (MMDAWPRCLE…GNGEVALAVG (76 aa)) is domain I, interacts with DnaA modulators. The segment at 76-105 (GSRPRAPEPAPAPVAATIAPQAAPIAPFAG) is domain II. The domain III, AAA+ region stretch occupies residues 106 to 323 (NLDSHYTFAN…GALNTLVARA (218 aa)). Positions 151, 153, 154, and 155 each coordinate ATP. Residues 324–443 (NFTGRSITVE…WEKLIRKLSE (120 aa)) form a domain IV, binds dsDNA region.

The protein belongs to the DnaA family. As to quaternary structure, oligomerizes as a right-handed, spiral filament on DNA at oriC.

It localises to the cytoplasm. Its function is as follows. Plays an essential role in the initiation and regulation of chromosomal replication. ATP-DnaA binds to the origin of replication (oriC) to initiate formation of the DNA replication initiation complex once per cell cycle. Binds the DnaA box (a 9 base pair repeat at the origin) and separates the double-stranded (ds)DNA. Forms a right-handed helical filament on oriC DNA; dsDNA binds to the exterior of the filament while single-stranded (ss)DNA is stabiized in the filament's interior. The ATP-DnaA-oriC complex binds and stabilizes one strand of the AT-rich DNA unwinding element (DUE), permitting loading of DNA polymerase. After initiation quickly degrades to an ADP-DnaA complex that is not apt for DNA replication. Binds acidic phospholipids. In Xanthomonas oryzae pv. oryzae (strain KACC10331 / KXO85), this protein is Chromosomal replication initiator protein DnaA.